Consider the following 420-residue polypeptide: 4-hydroxy-3-methylbut-2-en-1-yl diphosphate synthase (flavodoxin) (420 aa).

Positions 307, 310, 353, and 360 each coordinate [4Fe-4S] cluster.

Belongs to the IspG family. Requires [4Fe-4S] cluster as cofactor.

It catalyses the reaction (2E)-4-hydroxy-3-methylbut-2-enyl diphosphate + oxidized [flavodoxin] + H2O + 2 H(+) = 2-C-methyl-D-erythritol 2,4-cyclic diphosphate + reduced [flavodoxin]. The protein operates within isoprenoid biosynthesis; isopentenyl diphosphate biosynthesis via DXP pathway; isopentenyl diphosphate from 1-deoxy-D-xylulose 5-phosphate: step 5/6. Functionally, converts 2C-methyl-D-erythritol 2,4-cyclodiphosphate (ME-2,4cPP) into 1-hydroxy-2-methyl-2-(E)-butenyl 4-diphosphate. This is 4-hydroxy-3-methylbut-2-en-1-yl diphosphate synthase (flavodoxin) from Brucella abortus (strain S19).